A 537-amino-acid polypeptide reads, in one-letter code: Pancreatic secretory granule membrane major glycoprotein GP2 (537 aa).

A signal peptide spans 1–28 (MPHLMERMVGSGLLWLALVSCILTQASA). Residues 41–60 (SYGLDLDCGAPGTPEAHVCF) form a beta hairpin region. Disulfide bonds link Cys48-Cys59, Cys63-Cys157, Cys85-Cys172, Cys107-Cys145, Cys113-Cys177, Cys138-Cys146, Cys190-Cys200, Cys194-Cys209, Cys211-Cys241, Cys229-Cys320, and Cys261-Cys284. The segment at 61–81 (DPCQNYTLLDEPFRSTENSAG) is D10C. A glycan (N-linked (GlcNAc...) (high mannose) asparagine) is linked at Asn65. Residues Asn88, Asn122, and Asn134 are each glycosylated (N-linked (GlcNAc...) asparagine). Residues 186–230 (VEDKCEKACRPEEECLALNSTWGCFCRQDLNSSDVHSLQPQLDCG) form the EGF-like domain. 3 N-linked (GlcNAc...) asparagine glycosylation sites follow: Asn204, Asn216, and Asn260. A ZP-N region spans residues 228 to 321 (DCGPREIKVK…TILNINFQCA (94 aa)). One can recognise a ZP domain in the interval 228 to 484 (DCGPREIKVK…PSCSRSQVRS (257 aa)). Residues Asn291 and Asn342 are each glycosylated (N-linked (GlcNAc...) asparagine). The flexible ZP-N/ZP-C linker stretch occupies residues 322-345 (YPLDMKVSLQAALQPIVSSLNVSV). The segment at 346-357 (DGNGEFIVRMAL) is internal hydrophobic patch (IHP). A ZP-C region spans residues 346–484 (DGNGEFIVRM…PSCSRSQVRS (139 aa)). Asn362 is a glycosylation site (N-linked (GlcNAc...) asparagine). 3 disulfide bridges follow: Cys401/Cys461, Cys422/Cys477, and Cys466/Cys473. Residues 491–499 (LARVLDLGP) form an external hydrophobic patch (EHP) region. A lipid anchor (GPI-anchor amidated asparagine) is attached at Asn512. Positions 513–537 (GTPSTAGFLVAWPMVLLTVLLAWLF) are cleaved as a propeptide — removed in mature form.

In terms of assembly, interacts with SYCN. Interacts with bacterial adhesin fimH. In terms of processing, N-glycosylated. Glycosylated Asn-65 may be required for interaction with bacterial adhesin fimH. Expressed in pancreas (at protein level). Specifically expressed by M (microfold) cells which are atypical epithelial cells of the intestine (at protein level).

The protein localises to the zymogen granule membrane. Its subcellular location is the secreted. It localises to the cell membrane. It is found in the apical cell membrane. The protein resides in the membrane raft. The protein localises to the endosome. Functionally, functions as an intestinal M-cell transcytotic receptor specific for type-I-piliated bacteria that participates in the mucosal immune response toward these bacteria. At the apical membrane of M-cells it binds fimH, a protein of the bacteria type I pilus tip. Internalizes bound bacteria, like E.coli and S.typhimurium, from the lumen of the intestine and delivers them, through M-cells, to the underlying organized lymphoid follicles where they are captured by antigen-presenting dendritic cells to elicit a mucosal immune response. The chain is Pancreatic secretory granule membrane major glycoprotein GP2 from Homo sapiens (Human).